A 306-amino-acid polypeptide reads, in one-letter code: N-acetylmuramic acid 6-phosphate etherase (306 aa).

Residues 60–223 enclose the SIS domain; the sequence is TAAALRGGGR…STGAMVRLGK (164 aa). Catalysis depends on E88, which acts as the Proton donor. Residue E119 is part of the active site.

Belongs to the GCKR-like family. MurNAc-6-P etherase subfamily. As to quaternary structure, homodimer.

It carries out the reaction N-acetyl-D-muramate 6-phosphate + H2O = N-acetyl-D-glucosamine 6-phosphate + (R)-lactate. It participates in amino-sugar metabolism; N-acetylmuramate degradation. Specifically catalyzes the cleavage of the D-lactyl ether substituent of MurNAc 6-phosphate, producing GlcNAc 6-phosphate and D-lactate. In Gloeobacter violaceus (strain ATCC 29082 / PCC 7421), this protein is N-acetylmuramic acid 6-phosphate etherase.